The following is a 1076-amino-acid chain: Hormone-sensitive lipase (1076 aa).

Polar residues-rich tracts occupy residues 1–12 and 38–64; these read MEPGSKSVSRSD and ESKTLQGSNTQQKPASNQRPLTQQETP. Disordered regions lie at residues 1-198 and 229-250; these read MEPG…KSKQ and VTDSESESDVGSSSDTDSPATM. The segment covering 65–77 has biased composition (basic and acidic residues); the sequence is AQHDAESQKEPRA. Residues 94–116 show a composition bias toward polar residues; it reads APQQSPYIQRVLLTQQEAASQQG. Positions 140-149 are enriched in pro residues; that stretch reads GPGPGEPPPA. Low complexity predominate over residues 150-161; sequence QQEAESTPAAQA. Over residues 172 to 198 the composition is skewed to polar residues; it reads PTESTSQETPEQSDKQTTPVQGAKSKQ. The segment covering 237–246 has biased composition (low complexity); the sequence is DVGSSSDTDS. The Involved in the stabilization of the negatively charged intermediate by the formation of the oxyanion hole motif lies at 651-653; that stretch reads HGG. S725 is a catalytic residue. The segment at 838-930 is disordered; it reads KSQKMSEPIA…EAEAKNELSP (93 aa). Position 853 is a phosphoserine (S853). S855 carries the post-translational modification Phosphoserine; by AMPK. Residues 882 to 908 show a composition bias toward polar residues; it reads RGNSETSSDTPEMSLSAETLSPSTPSD. 4 positions are modified to phosphoserine: S897, S929, S950, and S951. Active-site residues include D994 and H1024. Residues 1055 to 1076 are disordered; the sequence is AGAGPSGETGAAGVDGGCGGRH. The segment covering 1067–1076 has biased composition (gly residues); it reads GVDGGCGGRH.

The protein belongs to the 'GDXG' lipolytic enzyme family. As to quaternary structure, monomer and homodimer. Interacts with CAVIN1 in the adipocyte cytoplasm. Interacts with PLIN5. Post-translationally, phosphorylation by AMPK reduces its translocation towards the lipid droplets. As to expression, testis.

It is found in the cell membrane. It localises to the membrane. The protein resides in the caveola. Its subcellular location is the cytoplasm. The protein localises to the cytosol. It is found in the lipid droplet. The catalysed reaction is a diacylglycerol + H2O = a monoacylglycerol + a fatty acid + H(+). It carries out the reaction a triacylglycerol + H2O = a diacylglycerol + a fatty acid + H(+). It catalyses the reaction a monoacylglycerol + H2O = glycerol + a fatty acid + H(+). The enzyme catalyses Hydrolyzes glycerol monoesters of long-chain fatty acids.. The catalysed reaction is 1,2-di-(9Z-octadecenoyl)-glycerol + (9Z)-octadecenoate + H(+) = 1,2,3-tri-(9Z-octadecenoyl)-glycerol + H2O. It carries out the reaction 2,3-di-(9Z)-octadecenoyl-sn-glycerol + H2O = 2-(9Z-octadecenoyl)-glycerol + (9Z)-octadecenoate + H(+). It catalyses the reaction cholesteryl (9Z-octadecenoate) + H2O = cholesterol + (9Z)-octadecenoate + H(+). The enzyme catalyses 1,2,3-tri-(9Z-octadecenoyl)-glycerol + H2O = di-(9Z)-octadecenoylglycerol + (9Z)-octadecenoate + H(+). The catalysed reaction is all-trans-retinyl hexadecanoate + H2O = all-trans-retinol + hexadecanoate + H(+). It carries out the reaction 1,2-di-(9Z-octadecenoyl)-glycerol + H2O = (9Z-octadecenoyl)-glycerol + (9Z)-octadecenoate + H(+). It catalyses the reaction 2-(5Z,8Z,11Z,14Z-eicosatetraenoyl)-glycerol + H2O = glycerol + (5Z,8Z,11Z,14Z)-eicosatetraenoate + H(+). The enzyme catalyses 1-(9Z-octadecenoyl)-glycerol + H2O = glycerol + (9Z)-octadecenoate + H(+). The catalysed reaction is 2-(9Z-octadecenoyl)-glycerol + H2O = glycerol + (9Z)-octadecenoate + H(+). It carries out the reaction 1-O-hexadecyl-2-acetyl-sn-glycerol + H2O = 1-O-hexadecyl-sn-glycerol + acetate + H(+). It catalyses the reaction 1,2-di-(9Z-octadecenoyl)-sn-glycerol + H2O = (9Z-octadecenoyl)-glycerol + (9Z)-octadecenoate + H(+). The enzyme catalyses 1,3-di-(9Z-octadecenoyl)-glycerol + H2O = 1-(9Z-octadecenoyl)-glycerol + (9Z)-octadecenoate + H(+). The catalysed reaction is 1,2-di-(9Z-octadecenoyl)-glycerol + H2O = 2-(9Z-octadecenoyl)-glycerol + (9Z)-octadecenoate + H(+). The protein operates within glycerolipid metabolism; triacylglycerol degradation. With respect to regulation, retinyl ester hydrolase is inhibited by bis-p-nitrophenyl phosphate. Functionally, lipase with broad substrate specificity, catalyzing the hydrolysis of triacylglycerols (TAGs), diacylglycerols (DAGs), monoacylglycerols (MAGs), cholesteryl esters and retinyl esters. Shows a preferential hydrolysis of DAGs over TAGs and MAGs and preferentially hydrolyzes the fatty acid (FA) esters at the sn-3 position of the glycerol backbone in DAGs. Preferentially hydrolyzes FA esters at the sn-1 and sn-2 positions of the glycerol backbone in TAGs. Catalyzes the hydrolysis of 2-arachidonoylglycerol, an endocannabinoid and of 2-acetyl monoalkylglycerol ether, the penultimate precursor of the pathway for de novo synthesis of platelet-activating factor. In adipose tissue and heart, it primarily hydrolyzes stored triglycerides to free fatty acids, while in steroidogenic tissues, it principally converts cholesteryl esters to free cholesterol for steroid hormone production. In Homo sapiens (Human), this protein is Hormone-sensitive lipase (LIPE).